The primary structure comprises 445 residues: Phosphoglucosamine mutase (445 aa).

The Phosphoserine intermediate role is filled by Ser99. Residues Ser99, Asp242, Asp244, and Asp246 each coordinate Mg(2+). Phosphoserine is present on Ser99.

Belongs to the phosphohexose mutase family. Mg(2+) is required as a cofactor. In terms of processing, activated by phosphorylation.

The catalysed reaction is alpha-D-glucosamine 1-phosphate = D-glucosamine 6-phosphate. Its function is as follows. Catalyzes the conversion of glucosamine-6-phosphate to glucosamine-1-phosphate. This is Phosphoglucosamine mutase from Campylobacter lari (strain RM2100 / D67 / ATCC BAA-1060).